The following is a 275-amino-acid chain: Diaminopimelate epimerase (275 aa).

Residues Asn-12, Gln-45, and Asn-65 each contribute to the substrate site. Cys-74 acts as the Proton donor in catalysis. Substrate contacts are provided by residues 75–76 (GN), Asn-158, Asn-191, and 209–210 (ER). Cys-218 (proton acceptor) is an active-site residue. 219-220 (GT) provides a ligand contact to substrate.

It belongs to the diaminopimelate epimerase family. Homodimer.

The protein resides in the cytoplasm. It carries out the reaction (2S,6S)-2,6-diaminopimelate = meso-2,6-diaminopimelate. The protein operates within amino-acid biosynthesis; L-lysine biosynthesis via DAP pathway; DL-2,6-diaminopimelate from LL-2,6-diaminopimelate: step 1/1. Functionally, catalyzes the stereoinversion of LL-2,6-diaminopimelate (L,L-DAP) to meso-diaminopimelate (meso-DAP), a precursor of L-lysine and an essential component of the bacterial peptidoglycan. The polypeptide is Diaminopimelate epimerase (Shewanella baltica (strain OS223)).